The chain runs to 443 residues: Serine transporter (443 aa).

11 consecutive transmembrane segments (helical) span residues 38–60 (TGWV…PVQV), 65–87 (LWVF…RLFI), 111–131 (WGIL…FVYS), 150–170 (GLLS…VAIS), 183–203 (GMVL…VGMW), 215–235 (GLLV…ILFI), 265–285 (IAFG…TLAM), 319–339 (VSVI…YLGF), 368–388 (GIMI…APVL), 390–410 (FTSI…AWLV), and 422–442 (MSLY…FLAF).

The protein belongs to the amino acid/polyamine transporter 2 family. SdaC/TdcC subfamily.

It is found in the cell inner membrane. Its function is as follows. Transports both D- and L-serine; allows growth of strain CFT073 cells normally unable to transport D-serine on that substrate. Transport relies on the H(+) gradient and is not competed by L-threonine. May play a role in L-cysteine detoxification. The sequence is that of Serine transporter from Escherichia coli O157:H7.